We begin with the raw amino-acid sequence, 356 residues long: Inositol monophosphatase 3 (356 aa).

The helical transmembrane segment at 11-31 (LGIGVFCLLGLGVLYHVYSGF) threads the bilayer. Mg(2+) is bound by residues Glu-127, Asp-167, Leu-169, Asp-170, and Asp-293. Glu-127 is a binding site for substrate. Substrate-binding positions include 169–172 (LDAT) and Asp-293.

Belongs to the inositol monophosphatase superfamily. Mg(2+) serves as cofactor.

It localises to the membrane. The catalysed reaction is a myo-inositol phosphate + H2O = myo-inositol + phosphate. The protein operates within polyol metabolism; myo-inositol biosynthesis; myo-inositol from D-glucose 6-phosphate: step 2/2. The polypeptide is Inositol monophosphatase 3 (bpnt2) (Xenopus tropicalis (Western clawed frog)).